The following is a 453-amino-acid chain: Bifunctional protein GlmU (453 aa).

The interval Met-1–Arg-226 is pyrophosphorylase. UDP-N-acetyl-alpha-D-glucosamine-binding positions include Leu-8–Gly-11, Lys-22, Gln-73, and Gly-78–Thr-79. Asp-102 provides a ligand contact to Mg(2+). Residues Gly-137, Glu-151, Asn-166, and Asn-224 each contribute to the UDP-N-acetyl-alpha-D-glucosamine site. Asn-224 provides a ligand contact to Mg(2+). A linker region spans residues Lys-227–Gln-247. Positions Gly-248 to Glu-453 are N-acetyltransferase. 2 residues coordinate UDP-N-acetyl-alpha-D-glucosamine: Arg-330 and Lys-348. His-360 serves as the catalytic Proton acceptor. UDP-N-acetyl-alpha-D-glucosamine-binding residues include Tyr-363 and Asn-374. Residues Ala-377, Asn-383–Tyr-384, Ser-402, Ala-420, and Arg-437 contribute to the acetyl-CoA site.

The protein in the N-terminal section; belongs to the N-acetylglucosamine-1-phosphate uridyltransferase family. It in the C-terminal section; belongs to the transferase hexapeptide repeat family. In terms of assembly, homotrimer. The cofactor is Mg(2+).

Its subcellular location is the cytoplasm. It catalyses the reaction alpha-D-glucosamine 1-phosphate + acetyl-CoA = N-acetyl-alpha-D-glucosamine 1-phosphate + CoA + H(+). It carries out the reaction N-acetyl-alpha-D-glucosamine 1-phosphate + UTP + H(+) = UDP-N-acetyl-alpha-D-glucosamine + diphosphate. Its pathway is nucleotide-sugar biosynthesis; UDP-N-acetyl-alpha-D-glucosamine biosynthesis; N-acetyl-alpha-D-glucosamine 1-phosphate from alpha-D-glucosamine 6-phosphate (route II): step 2/2. The protein operates within nucleotide-sugar biosynthesis; UDP-N-acetyl-alpha-D-glucosamine biosynthesis; UDP-N-acetyl-alpha-D-glucosamine from N-acetyl-alpha-D-glucosamine 1-phosphate: step 1/1. It functions in the pathway bacterial outer membrane biogenesis; LPS lipid A biosynthesis. In terms of biological role, catalyzes the last two sequential reactions in the de novo biosynthetic pathway for UDP-N-acetylglucosamine (UDP-GlcNAc). The C-terminal domain catalyzes the transfer of acetyl group from acetyl coenzyme A to glucosamine-1-phosphate (GlcN-1-P) to produce N-acetylglucosamine-1-phosphate (GlcNAc-1-P), which is converted into UDP-GlcNAc by the transfer of uridine 5-monophosphate (from uridine 5-triphosphate), a reaction catalyzed by the N-terminal domain. In Pseudoalteromonas atlantica (strain T6c / ATCC BAA-1087), this protein is Bifunctional protein GlmU.